The chain runs to 51 residues: Conotoxin Cal6.33 (51 aa).

An N-terminal signal peptide occupies residues 1-22 (MKLTCVVIIAVLILTACQFTTA). Intrachain disulfides connect C25–C39, C32–C43, and C38–C50.

Belongs to the conotoxin O1 superfamily. Expressed by the venom duct.

The protein resides in the secreted. Functionally, probable neurotoxin. The chain is Conotoxin Cal6.33 from Californiconus californicus (California cone).